Consider the following 325-residue polypeptide: Diacylglycerol acyltransferase/mycolyltransferase Ag85B (325 aa).

The first 40 residues, 1–40, serve as a signal peptide directing secretion; sequence MTDVSGKIRAWGRRLLVGAAAAAALPGLVGLAGGAATAGA. Position 82 to 83 (82 to 83) interacts with substrate; it reads LR. The segment at 98 to 108 is fibronectin-binding; sequence FEWYYQSGLSV. The cysteines at positions 127 and 132 are disulfide-linked. Residues Ser-166 and Asp-194 each contribute to the substrate site. Residue Ser-166 is the Nucleophile of the active site. The active site involves Glu-270. Residues 272–275, Lys-279, and 302–304 contribute to the substrate site; these read FVRS and HSW. Residue His-302 is part of the active site.

Belongs to the mycobacterial A85 antigen family.

It localises to the secreted. The catalysed reaction is 2 alpha,alpha'-trehalose 6-mycolate = alpha,alpha'-trehalose 6,6'-bismycolate + alpha,alpha-trehalose. It carries out the reaction an acyl-CoA + a 1,2-diacyl-sn-glycerol = a triacyl-sn-glycerol + CoA. Its function is as follows. The antigen 85 proteins (FbpA, FbpB, FbpC) are responsible for the high affinity of mycobacteria for fibronectin, a large adhesive glycoprotein, which facilitates the attachment of M.tuberculosis to murine alveolar macrophages (AMs). They also help to maintain the integrity of the cell wall by catalyzing the transfer of mycolic acids to cell wall arabinogalactan and through the synthesis of alpha,alpha-trehalose dimycolate (TDM, cord factor). They catalyze the transfer of a mycoloyl residue from one molecule of alpha,alpha-trehalose monomycolate (TMM) to another TMM, leading to the formation of TDM. This Mycobacterium kansasii protein is Diacylglycerol acyltransferase/mycolyltransferase Ag85B (fbpB).